Here is a 449-residue protein sequence, read N- to C-terminus: Xylose isomerase (449 aa).

Active-site residues include His-103 and Asp-106. Mg(2+)-binding residues include Glu-234, Glu-270, His-273, Asp-298, Asp-309, Asp-311, and Asp-342.

The protein belongs to the xylose isomerase family. In terms of assembly, homotetramer. Mg(2+) serves as cofactor.

It localises to the cytoplasm. The catalysed reaction is alpha-D-xylose = alpha-D-xylulofuranose. Functionally, involved in D-xylose catabolism. This chain is Xylose isomerase (xylA), found in Lactiplantibacillus pentosus (Lactobacillus pentosus).